The sequence spans 154 residues: Protein X (154 aa).

Positions 68–117 (PCALRFTSARRMETTVNAHQVLPKVLYKRTLGLSAMSTTDLEAYFKDCLF) are mitochondrial targeting sequence.

This sequence belongs to the orthohepadnavirus protein X family. May form homodimer. May interact with host CEBPA, CFLAR, CREB1, DDB1, E4F1, HBXIP, HSPD1/HSP60, NFKBIA, POLR2E and SMAD4. Interacts with host SMC5-SMC6 complex and induces its degradation. Interacts with host TRPC4AP; leading to prevent ubiquitination of TRPC4AP. Interacts with host PLSCR1; this interaction promotes ubiquitination and degradation of HBx and impairs HBx-mediated cell proliferation. In terms of processing, a fraction may be phosphorylated in insect cells and HepG2 cells, a human hepatoblastoma cell line. Phosphorylated in vitro by host protein kinase C or mitogen-activated protein kinase. N-acetylated in insect cells.

Its subcellular location is the host cytoplasm. The protein resides in the host nucleus. The protein localises to the host mitochondrion. Its function is as follows. Multifunctional protein that plays a role in silencing host antiviral defenses and promoting viral transcription. Does not seem to be essential for HBV infection. May be directly involved in development of cirrhosis and liver cancer (hepatocellular carcinoma). Most of cytosolic activities involve modulation of cytosolic calcium. The effect on apoptosis is controversial depending on the cell types in which the studies have been conducted. May induce apoptosis by localizing in mitochondria and causing loss of mitochondrial membrane potential. May also modulate apoptosis by binding host CFLAR, a key regulator of the death-inducing signaling complex (DISC). Promotes viral transcription by using the host E3 ubiquitin ligase DDB1 to target the SMC5-SMC6 complex to proteasomal degradation. This host complex would otherwise bind to viral episomal DNA, and prevents its transcription. Moderately stimulates transcription of many different viral and cellular transcription elements. Promoters and enhancers stimulated by HBx contain DNA binding sites for NF-kappa-B, AP-1, AP-2, c-EBP, ATF/CREB, or the calcium-activated factor NF-AT. The protein is Protein X of Homo sapiens (Human).